Reading from the N-terminus, the 1049-residue chain is Bifunctional cytochrome P450/NADPH--P450 reductase (1049 aa).

The cytochrome P450 stretch occupies residues 2-472 (TIKEMPQPKT…STEQSAKKVR (471 aa)). Tyrosine 52 contributes to the (9Z)-hexadecenoate binding site. Cysteine 401 contributes to the heme binding site. The NADPH--P450 reductase stretch occupies residues 473–1049 (KKAENAHNTP…GRYAKDVWAG (577 aa)). One can recognise a Flavodoxin-like domain in the interval 483 to 622 (LLVLYGSNMG…TYEEWREHMW (140 aa)). Residues 489 to 494 (SNMGTA), 536 to 539 (SYNG), 570 to 572 (CGD), and 578 to 580 (TYQ) contribute to the FMN site. An FAD-binding FR-type domain is found at 660 to 892 (HGAFSTNVVA…STPQSEFTLP (233 aa)).

This sequence in the N-terminal section; belongs to the cytochrome P450 family. FAD serves as cofactor. The cofactor is FMN. Requires heme as cofactor.

The protein localises to the cytoplasm. It catalyses the reaction 2 oxidized [cytochrome P450] + NADPH = 2 reduced [cytochrome P450] + NADP(+) + H(+). The enzyme catalyses an organic molecule + reduced [NADPH--hemoprotein reductase] + O2 = an alcohol + oxidized [NADPH--hemoprotein reductase] + H2O + H(+). Inhibited by N-(12-imidazolyl-dodecanoyl)-L-leucine. Its function is as follows. Functions as a fatty acid monooxygenase. Catalyzes hydroxylation of fatty acids at omega-1, omega-2 and omega-3 positions. Shows activity toward medium and long-chain fatty acids, with optimum chain lengths of 12, 14 and 16 carbons (lauric, myristic, and palmitic acids). Able to metabolize some of these primary metabolites to secondary and tertiary products. Marginal activity towards short chain lengths of 8-10 carbons. Hydroxylates highly branched fatty acids, which play an essential role in membrane fluidity regulation. Also displays a NADPH-dependent reductase activity in the C-terminal domain, which allows electron transfer from NADPH to the heme iron of the cytochrome P450 N-terminal domain. Involved in inactivation of quorum sensing signals of other competing bacteria by oxidazing efficiently acyl homoserine lactones (AHLs), molecules involved in quorum sensing signaling pathways, and their lactonolysis products acyl homoserines (AHs). The sequence is that of Bifunctional cytochrome P450/NADPH--P450 reductase from Priestia megaterium (strain ATCC 14581 / DSM 32 / CCUG 1817 / JCM 2506 / NBRC 15308 / NCIMB 9376 / NCTC 10342 / NRRL B-14308 / VKM B-512 / Ford 19) (Bacillus megaterium).